The following is a 273-amino-acid chain: Formamidopyrimidine-DNA glycosylase (273 aa).

Pro-2 serves as the catalytic Schiff-base intermediate with DNA. Residue Glu-3 is the Proton donor of the active site. Lys-59 (proton donor; for beta-elimination activity) is an active-site residue. The DNA site is built by His-93, Arg-111, and Arg-154. An FPG-type zinc finger spans residues 239–273 (KVYGRGGEPCKECGHTLVRIRLAGRSTVFCPCCQV). Residue Arg-263 is the Proton donor; for delta-elimination activity of the active site.

Belongs to the FPG family. As to quaternary structure, monomer. It depends on Zn(2+) as a cofactor.

The catalysed reaction is Hydrolysis of DNA containing ring-opened 7-methylguanine residues, releasing 2,6-diamino-4-hydroxy-5-(N-methyl)formamidopyrimidine.. The enzyme catalyses 2'-deoxyribonucleotide-(2'-deoxyribose 5'-phosphate)-2'-deoxyribonucleotide-DNA = a 3'-end 2'-deoxyribonucleotide-(2,3-dehydro-2,3-deoxyribose 5'-phosphate)-DNA + a 5'-end 5'-phospho-2'-deoxyribonucleoside-DNA + H(+). In terms of biological role, involved in base excision repair of DNA damaged by oxidation or by mutagenic agents. Acts as a DNA glycosylase that recognizes and removes damaged bases. Has a preference for oxidized purines, such as 7,8-dihydro-8-oxoguanine (8-oxoG). Has AP (apurinic/apyrimidinic) lyase activity and introduces nicks in the DNA strand. Cleaves the DNA backbone by beta-delta elimination to generate a single-strand break at the site of the removed base with both 3'- and 5'-phosphates. The sequence is that of Formamidopyrimidine-DNA glycosylase from Desulfitobacterium hafniense (strain DSM 10664 / DCB-2).